Reading from the N-terminus, the 370-residue chain is Histidinol-phosphate aminotransferase (370 aa).

Residue K223 is modified to N6-(pyridoxal phosphate)lysine.

This sequence belongs to the class-II pyridoxal-phosphate-dependent aminotransferase family. Histidinol-phosphate aminotransferase subfamily. Homodimer. Requires pyridoxal 5'-phosphate as cofactor.

It carries out the reaction L-histidinol phosphate + 2-oxoglutarate = 3-(imidazol-4-yl)-2-oxopropyl phosphate + L-glutamate. The protein operates within amino-acid biosynthesis; L-histidine biosynthesis; L-histidine from 5-phospho-alpha-D-ribose 1-diphosphate: step 7/9. This Methylobacterium nodulans (strain LMG 21967 / CNCM I-2342 / ORS 2060) protein is Histidinol-phosphate aminotransferase.